Here is a 334-residue protein sequence, read N- to C-terminus: S-adenosylmethionine decarboxylase proenzyme 2 (334 aa).

F7 provides a ligand contact to substrate. Active-site residues include E8 and E11. Residue E67 coordinates substrate. S68 serves as the catalytic Schiff-base intermediate with substrate; via pyruvic acid. At S68 the chain carries Pyruvic acid (Ser); by autocatalysis. C82 functions as the Proton donor; for catalytic activity in the catalytic mechanism. F223 serves as a coordination point for substrate. Residues S229 and H243 each act as proton acceptor; for processing activity in the active site. E247 contacts substrate. Phosphoserine is present on S298.

This sequence belongs to the eukaryotic AdoMetDC family. In terms of assembly, heterotetramer of two alpha and two beta chains. Requires pyruvate as cofactor. Post-translationally, is synthesized initially as an inactive proenzyme. Formation of the active enzyme involves a self-maturation process in which the active site pyruvoyl group is generated from an internal serine residue via an autocatalytic post-translational modification. Two non-identical subunits are generated from the proenzyme in this reaction, and the pyruvate is formed at the N-terminus of the alpha chain, which is derived from the carboxyl end of the proenzyme. The post-translation cleavage follows an unusual pathway, termed non-hydrolytic serinolysis, in which the side chain hydroxyl group of the serine supplies its oxygen atom to form the C-terminus of the beta chain, while the remainder of the serine residue undergoes an oxidative deamination to produce ammonia and the pyruvoyl group blocking the N-terminus of the alpha chain.

The catalysed reaction is S-adenosyl-L-methionine + H(+) = S-adenosyl 3-(methylsulfanyl)propylamine + CO2. Its pathway is amine and polyamine biosynthesis; S-adenosylmethioninamine biosynthesis; S-adenosylmethioninamine from S-adenosyl-L-methionine: step 1/1. Functionally, essential for biosynthesis of the polyamines spermidine and spermine. Promotes maintenance and self-renewal of embryonic stem cells, by maintaining spermine levels. This Mus spretus (Western Mediterranean mouse) protein is S-adenosylmethionine decarboxylase proenzyme 2 (Amd2).